Here is a 400-residue protein sequence, read N- to C-terminus: Subtilisin-like protease 2 (400 aa).

The N-terminal stretch at 1–20 is a signal peptide; it reads MKFSQSLIALAACFLPLIAA. The propeptide occupies 21-119; the sequence is APEEAQHAKI…IERDGKVQAN (99 aa). Residues 42 to 117 enclose the Inhibitor I9 domain; it reads SYIVVFNKGV…AWIERDGKVQ (76 aa). N82 carries an N-linked (GlcNAc...) asparagine glycan. The 273-residue stretch at 128–400 folds into the Peptidase S8 domain; that stretch reads TWGLGRISHK…NLIAYNGNGA (273 aa). Residues D160, H192, and S345 each act as charge relay system in the active site.

The protein belongs to the peptidase S8 family.

Its subcellular location is the secreted. Its activity is regulated as follows. Potently inhibited by the serine peptidase inhibitor chymostatin. Also inhibited by antpain and PMSF. Functionally, major secreted subtilisin-like serine endopeptidase. Preferentially cleaves substrates containing hydrophobic residues at P4, positively charged residues at P3, small or flexible residues at P2, and large, bulky residues at P1. Mediates the degradation of collagen, the major structural protein in the mammalian host. Degrades the nonhelical regions of collagen that function in the cross-linking of the helical components. May function as virulence factor involved in epidermal wing necrosis observed in white nose syndrome (WNS) in bats. The sequence is that of Subtilisin-like protease 2 from Pseudogymnoascus destructans (strain ATCC MYA-4855 / 20631-21) (Bat white-nose syndrome fungus).